The sequence spans 301 residues: Putative S-adenosyl-L-methionine-dependent methyltransferase MAP_3777 (301 aa).

Residues Asp126 and 155–156 (DL) contribute to the S-adenosyl-L-methionine site.

This sequence belongs to the UPF0677 family.

In terms of biological role, exhibits S-adenosyl-L-methionine-dependent methyltransferase activity. The sequence is that of Putative S-adenosyl-L-methionine-dependent methyltransferase MAP_3777 from Mycolicibacterium paratuberculosis (strain ATCC BAA-968 / K-10) (Mycobacterium paratuberculosis).